A 251-amino-acid chain; its full sequence is ATP synthase subunit a (251 aa).

5 helical membrane passes run 34–54 (VFLTSWFVIGVLVLASVAASS), 93–113 (FVGTLFLFIFVSNWSGALVPF), 130–150 (INTTVALALLTSLAYFYAGFS), 195–215 (LVVGVLVLLVPLFVPLPVMAL), and 216–236 (GLFTSAIQALIFATLAAAYIG).

It belongs to the ATPase A chain family. F-type ATPases have 2 components, CF(1) - the catalytic core - and CF(0) - the membrane proton channel. CF(1) has five subunits: alpha(3), beta(3), gamma(1), delta(1), epsilon(1). CF(0) has four main subunits: a, b, b' and c.

It is found in the cellular thylakoid membrane. Functionally, key component of the proton channel; it plays a direct role in the translocation of protons across the membrane. This is ATP synthase subunit a from Trichormus variabilis (strain ATCC 29413 / PCC 7937) (Anabaena variabilis).